The chain runs to 799 residues: High affinity nerve growth factor receptor (799 aa).

The first 33 residues, 1–33 (MLRGQRLGQLGWHRPAAGLGSLMTSLMLACASA), serve as a signal peptide directing secretion. Residues 34 to 420 (ASCREVCCPV…VEKKDETPFG (387 aa)) are Extracellular-facing. 2 disulfides stabilise this stretch: C36-C41 and C40-C50. The N-linked (GlcNAc...) asparagine glycan is linked to N67. LRR repeat units lie at residues 90–113 (LGEL…AFRF) and 116–137 (RLSH…TVQG). N121, N190, N204, N255, N264, N320, N325, N341, N361, and N404 each carry an N-linked (GlcNAc...) asparagine glycan. An LRRCT domain is found at 148–219 (NPLHCSCALF…GDDVFLQCQV (72 aa)). The cysteines at positions 154 and 193 are disulfide-linked. 2 Ig-like C2-type domains span residues 196 to 285 (PTVK…VSVS) and 205 to 368 (DSVE…LAAN). 2 disulfides stabilise this stretch: C217-C267 and C302-C348. A helical transmembrane segment spans residues 421 to 441 (VSVAVGLAVSAALFLSALLLV). Topologically, residues 442–799 (LNKCGQRSKF…APPSYLDVLG (358 aa)) are cytoplasmic. The tract at residues 472 to 493 (MTLGGSSLSPTEGKGSGLQGHI) is interaction with SQSTM1. Y499 is subject to Phosphotyrosine; by autocatalysis. Residues 513-784 (IILKWELGEG…LSMKDVHARL (272 aa)) enclose the Protein kinase domain. Residues 519-527 (LGEGAFGKV) and K547 each bind ATP. The active-site Proton acceptor is the D653. Residues Y679, Y683, Y684, and Y794 each carry the phosphotyrosine; by autocatalysis modification.

Belongs to the protein kinase superfamily. Tyr protein kinase family. Insulin receptor subfamily. Exists in a dynamic equilibrium between monomeric (low affinity) and dimeric (high affinity) structures. Homodimerization is induced by binding of a NGF dimer. Found in a complex, at least composed of KIDINS220, MAGI2, NTRK1 and RAPGEF2; the complex is mainly formed at late endosomes in a nerve growth factor (NGF)-dependent manner. Interacts with RAPGEF2; the interaction is strengthened after NGF stimulation. Interacts with SQSTM1; bridges NTRK1 to NGFR. Forms a ternary complex with NGFR and KIDINS220; this complex is affected by the expression levels of KIDINS220 and an increase in KIDINS220 expression leads to a decreased association of NGFR and NTRK1. Interacts (phosphorylated upon activation by NGF) with SHC1; mediates SHC1 phosphorylation and activation. Interacts (phosphorylated upon activation by NGF) with PLCG1; mediates PLCG1 phosphorylation and activation. Interacts (phosphorylated) with SH2B1 and SH2B2. Interacts with GRB2. Interacts with PIK3R1. Interacts with FRS2. Interacts with SORT1; may regulate NTRK1 anterograde axonal transport. Interacts with SH2D1A; regulates NTRK1. Interacts with NRADD. Interacts with RAB7A. Interacts with PTPRS. Interacts with USP36; USP36 does not deubiquitinate NTRK1. Interacts with GGA3. Interacts with TSPAN1; this interaction promotes NTRK1 stability. Ligand-mediated autophosphorylation. Interaction with SQSTM1 is phosphotyrosine-dependent. Autophosphorylation at Tyr-499 mediates interaction and phosphorylation of SHC1. In terms of processing, N-glycosylated. Post-translationally, ubiquitinated. Undergoes polyubiquitination upon activation; regulated by NGFR. Ubiquitination by NEDD4L leads to degradation. Ubiquitination regulates the internalization of the receptor.

The protein localises to the cell membrane. Its subcellular location is the early endosome membrane. It localises to the late endosome membrane. The protein resides in the recycling endosome membrane. It carries out the reaction L-tyrosyl-[protein] + ATP = O-phospho-L-tyrosyl-[protein] + ADP + H(+). The pro-survival signaling effect of NTRK1 in neurons requires its endocytosis into signaling early endosomes and its retrograde axonal transport. This is regulated by different proteins including CFL1, RAC1 and SORT1. NTF3 is unable to induce this signaling probably due to the lability of the NTF3-NTRK1 complex in endosomes. SH2D1A inhibits the autophosphorylation of the receptor, and alters the recruitment and activation of downstream effectors and signaling cascades. Regulated by NGFR. Functionally, receptor tyrosine kinase involved in the development and the maturation of the central and peripheral nervous systems through regulation of proliferation, differentiation and survival of sympathetic and nervous neurons. High affinity receptor for NGF which is its primary ligand, it can also bind and be activated by NTF3/neurotrophin-3. However, NTF3 only supports axonal extension through NTRK1 but has no effect on neuron survival. Upon dimeric NGF ligand-binding, undergoes homodimerization, autophosphorylation and activation. Recruits, phosphorylates and/or activates several downstream effectors including SHC1, FRS2, SH2B1, SH2B2 and PLCG1 that regulate distinct overlapping signaling cascades driving cell survival and differentiation. Through SHC1 and FRS2 activates a GRB2-Ras-MAPK cascade that regulates cell differentiation and survival. Through PLCG1 controls NF-Kappa-B activation and the transcription of genes involved in cell survival. Through SHC1 and SH2B1 controls a Ras-PI3 kinase-AKT1 signaling cascade that is also regulating survival. In absence of ligand and activation, may promote cell death, making the survival of neurons dependent on trophic factors. This Mus musculus (Mouse) protein is High affinity nerve growth factor receptor (Ntrk1).